We begin with the raw amino-acid sequence, 671 residues long: UvrABC system protein B (671 aa).

A Helicase ATP-binding domain is found at 25–412 (EGIDAGLAHQ…AGRVVEQVVR (388 aa)). 38-45 (GVTGSGKT) contributes to the ATP binding site. The Beta-hairpin signature appears at 91-114 (YYDYYQPEAYVPSSDTFIEKDASI). In terms of domain architecture, Helicase C-terminal spans 429-595 (QVDDLLSEIH…GVFKDVADIM (167 aa)). The interval 600-624 (VPGSRSKKRKGMAKAAEENARYENE) is disordered. The span at 614–624 (AAEENARYENE) shows a compositional bias: basic and acidic residues. Residues 632–667 (NKRIRQLEEKMYQLARDLEFEAAAQMRDEIGKLRER) form the UVR domain.

It belongs to the UvrB family. Forms a heterotetramer with UvrA during the search for lesions. Interacts with UvrC in an incision complex.

It localises to the cytoplasm. Its function is as follows. The UvrABC repair system catalyzes the recognition and processing of DNA lesions. A damage recognition complex composed of 2 UvrA and 2 UvrB subunits scans DNA for abnormalities. Upon binding of the UvrA(2)B(2) complex to a putative damaged site, the DNA wraps around one UvrB monomer. DNA wrap is dependent on ATP binding by UvrB and probably causes local melting of the DNA helix, facilitating insertion of UvrB beta-hairpin between the DNA strands. Then UvrB probes one DNA strand for the presence of a lesion. If a lesion is found the UvrA subunits dissociate and the UvrB-DNA preincision complex is formed. This complex is subsequently bound by UvrC and the second UvrB is released. If no lesion is found, the DNA wraps around the other UvrB subunit that will check the other stand for damage. In Pseudomonas savastanoi pv. phaseolicola (strain 1448A / Race 6) (Pseudomonas syringae pv. phaseolicola (strain 1448A / Race 6)), this protein is UvrABC system protein B.